The chain runs to 155 residues: 6,7-dimethyl-8-ribityllumazine synthase (155 aa).

5-amino-6-(D-ribitylamino)uracil is bound by residues Trp23, 57 to 59 (AWE), and 81 to 83 (CVI). 86–87 (DT) provides a ligand contact to (2S)-2-hydroxy-3-oxobutyl phosphate. The active-site Proton donor is the His89. Asn114 contacts 5-amino-6-(D-ribitylamino)uracil. (2S)-2-hydroxy-3-oxobutyl phosphate is bound at residue Arg128.

This sequence belongs to the DMRL synthase family. Forms an icosahedral capsid composed of 60 subunits, arranged as a dodecamer of pentamers.

It carries out the reaction (2S)-2-hydroxy-3-oxobutyl phosphate + 5-amino-6-(D-ribitylamino)uracil = 6,7-dimethyl-8-(1-D-ribityl)lumazine + phosphate + 2 H2O + H(+). It participates in cofactor biosynthesis; riboflavin biosynthesis; riboflavin from 2-hydroxy-3-oxobutyl phosphate and 5-amino-6-(D-ribitylamino)uracil: step 1/2. In terms of biological role, catalyzes the formation of 6,7-dimethyl-8-ribityllumazine by condensation of 5-amino-6-(D-ribitylamino)uracil with 3,4-dihydroxy-2-butanone 4-phosphate. This is the penultimate step in the biosynthesis of riboflavin. This is 6,7-dimethyl-8-ribityllumazine synthase from Stenotrophomonas maltophilia (strain R551-3).